A 179-amino-acid chain; its full sequence is O-acetyl-ADP-ribose deacetylase (179 aa).

One can recognise a Macro domain in the interval 1-175 (MTSRLQVIQG…LYARLLTQQG (175 aa)). Substrate-binding positions include 11 to 12 (DI), Asn-25, 33 to 35 (GVD), and 122 to 126 (STGVY). Residue Asp-35 is the Proton acceptor of the active site.

Belongs to the MacroD-type family. YmdB subfamily. In terms of assembly, homodimer. Interacts with RNase III.

The catalysed reaction is 3''-O-acetyl-ADP-D-ribose + H2O = ADP-D-ribose + acetate + H(+). The enzyme catalyses 2''-O-acetyl-ADP-D-ribose + H2O = ADP-D-ribose + acetate + H(+). In terms of biological role, deacetylates O-acetyl-ADP ribose to yield ADP-ribose and free acetate. Down-regulates ribonuclease 3 (RNase III) activity. Acts by interacting directly with the region of the ribonuclease that is required for dimerization/activation. The sequence is that of O-acetyl-ADP-ribose deacetylase from Salmonella typhi.